A 228-amino-acid polypeptide reads, in one-letter code: Transcription termination/antitermination protein NusG (228 aa).

The protein belongs to the NusG family.

Its function is as follows. Participates in transcription elongation, termination and antitermination. The polypeptide is Transcription termination/antitermination protein NusG (Mycobacterium leprae (strain TN)).